The primary structure comprises 146 residues: Hemoglobin subunit beta (146 aa).

One can recognise a Globin domain in the interval 2-146 (HWTAEEKQLI…VAHALARKYH (145 aa)). Heme b is bound by residues His-63 and His-92.

This sequence belongs to the globin family. Heterotetramer of two alpha chains and two beta chains. As to expression, red blood cells.

Functionally, involved in oxygen transport from the lung to the various peripheral tissues. This chain is Hemoglobin subunit beta (HBB), found in Branta canadensis (Canada goose).